Here is a 179-residue protein sequence, read N- to C-terminus: Adenine phosphoribosyltransferase (179 aa).

The protein belongs to the purine/pyrimidine phosphoribosyltransferase family. Homodimer.

It localises to the cytoplasm. It catalyses the reaction AMP + diphosphate = 5-phospho-alpha-D-ribose 1-diphosphate + adenine. It functions in the pathway purine metabolism; AMP biosynthesis via salvage pathway; AMP from adenine: step 1/1. Its function is as follows. Catalyzes a salvage reaction resulting in the formation of AMP, that is energically less costly than de novo synthesis. This is Adenine phosphoribosyltransferase from Nitrobacter hamburgensis (strain DSM 10229 / NCIMB 13809 / X14).